We begin with the raw amino-acid sequence, 1017 residues long: GPI ethanolamine phosphate transferase 3 (1017 aa).

A helical membrane pass occupies residues 34-54 (FYIILLVFIAILQFISIAFFT). Asn66, Asn71, Asn100, Asn182, and Asn203 each carry an N-linked (GlcNAc...) asparagine glycan. A helical membrane pass occupies residues 347–367 (VSSLALLMGQPIPFNNLGWPI). N-linked (GlcNAc...) asparagine glycosylation is present at Asn411. 6 helical membrane passes run 457-477 (LLATSLVLLISITKLIPSIVV), 484-504 (FVPGIIIMVLVTNLCFHGIFY), 515-535 (FWGTLLATAIGIIIGCYITIF), 558-578 (IAVMFMIIHALLFTSNSFTIW), 582-602 (IVAFLLSTFGMLTLYEFVFLP), and 644-664 (LGGYHSAVLIIFTRLASMITI). 2 N-linked (GlcNAc...) asparagine glycosylation sites follow: Asn681 and Asn682. Residues 685-705 (WWVLGLCFLMIFILPACITGY) form a helical membrane-spanning segment. Residue Asn707 is glycosylated (N-linked (GlcNAc...) asparagine). A helical transmembrane segment spans residues 715–735 (AAPIWINVFLKGILGLNFVYW). N-linked (GlcNAc...) asparagine glycosylation occurs at Asn742. Helical transmembrane passes span 765 to 785 (IIAGFSLIASNVGWLMGPLCI), 806 to 826 (NIYGSEFFLLVINVLISILLF), 829 to 849 (PLAQLSYFLMCNQLLSILEII), 903 to 923 (IAIILNTFGPHILVSLSVALL), 947 to 967 (GILLTYNTILCLSSFIWVTHF), and 981 to 1001 (FIFASLSLIVTQLVVTFGTIA).

Belongs to the PIGG/PIGN/PIGO family. PIGO subfamily. Post-translationally, glycosylated.

Its subcellular location is the endoplasmic reticulum membrane. It participates in glycolipid biosynthesis; glycosylphosphatidylinositol-anchor biosynthesis. Involved in glycosylphosphatidylinositol-anchor biosynthesis. Transfers ethanolamine phosphate to the GPI third mannose which links the GPI-anchor to the C-terminus of the proteins by an amide bond. Involved in cell wall biosynthesis. This chain is GPI ethanolamine phosphate transferase 3 (GPI13), found in Saccharomyces cerevisiae (strain ATCC 204508 / S288c) (Baker's yeast).